Here is a 145-residue protein sequence, read N- to C-terminus: Arginine repressor (145 aa).

Belongs to the ArgR family.

The protein resides in the cytoplasm. The protein operates within amino-acid biosynthesis; L-arginine biosynthesis [regulation]. Regulates arginine biosynthesis genes. This is Arginine repressor from Streptococcus equi subsp. zooepidemicus (strain H70).